We begin with the raw amino-acid sequence, 375 residues long: 23S rRNA (uracil(747)-C(5))-methyltransferase RlmC (375 aa).

[4Fe-4S] cluster contacts are provided by Cys3, Cys11, Cys14, and Cys87. Positions 212, 241, 262, and 307 each coordinate S-adenosyl-L-methionine. The active-site Nucleophile is Cys334.

This sequence belongs to the class I-like SAM-binding methyltransferase superfamily. RNA M5U methyltransferase family. RlmC subfamily.

The catalysed reaction is uridine(747) in 23S rRNA + S-adenosyl-L-methionine = 5-methyluridine(747) in 23S rRNA + S-adenosyl-L-homocysteine + H(+). In terms of biological role, catalyzes the formation of 5-methyl-uridine at position 747 (m5U747) in 23S rRNA. This is 23S rRNA (uracil(747)-C(5))-methyltransferase RlmC from Shigella dysenteriae serotype 1 (strain Sd197).